Here is a 428-residue protein sequence, read N- to C-terminus: MAIQIPRGTQDILPGDVETWQWIEQKAYDLCRRYNYQEIRVPMFEHTELFLRGVGDTTDIVQKEMYTFEDRGGRSLTLRPEGTASVTRAYVSNKLYGQANQPTKLFYIGPMFRYERPQSGRMRQFVQFGVEALGSADPAIDAEVLALVMRFYEELGLKNLKLVINSLGDTDSRLAHREALVNHFKPRIHEFCNDCQDRLEKNPLRILDCKKDRDHELMGTAPSIHDYLSTESKAYFEKVQSYLTALNIPFVVDATLVRGLDYYNHTAFEVMVDGEGFGAITTLCGGGRYNGLVEEIGGPETPGIGFALSIERAIMALEAQQAKPAHNQAIDCYVVTLGEAAKDKGVELVYQLRNAGISAEKDYLDRKMKGQLKAADRLHAKWTVILGEDELAVGKVNVKNMETGEQTDVALTDLVSHMKQQVEGGNES.

It belongs to the class-II aminoacyl-tRNA synthetase family. In terms of assembly, homodimer.

The protein resides in the cytoplasm. The catalysed reaction is tRNA(His) + L-histidine + ATP = L-histidyl-tRNA(His) + AMP + diphosphate + H(+). The sequence is that of Histidine--tRNA ligase from Halalkalibacterium halodurans (strain ATCC BAA-125 / DSM 18197 / FERM 7344 / JCM 9153 / C-125) (Bacillus halodurans).